Consider the following 287-residue polypeptide: Nucleoside kinase (287 aa).

Substrate is bound by residues D13, N28, G38, and N42. Q102 provides a ligand contact to ATP. Substrate-binding residues include S104 and Q150. ATP contacts are provided by residues N173 and 196-201; that span reads TNGERG. D227 serves as a coordination point for substrate. The active-site Proton acceptor is the D227.

It belongs to the carbohydrate kinase PfkB family. As to quaternary structure, homodimer. Mg(2+) is required as a cofactor. Requires Co(2+) as cofactor.

It catalyses the reaction adenosine + ATP = AMP + ADP + H(+). The enzyme catalyses cytidine + ATP = CMP + ADP + H(+). It carries out the reaction guanosine + ATP = GMP + ADP + H(+). The catalysed reaction is inosine + ATP = IMP + ADP + H(+). Nucleoside kinase with broad substrate specificity. Catalyzes the phosphorylation of a variety of nucleosides to the corresponding nucleoside 5'-mono-phosphate in the presence of phosphate donors and divalent cations. Displays the most efficient activity with guanosine, followed by inosine, cytidine, and adenosine. Negligible enzymatic activity is detected with thymidine, uridine, and 2-deoxyadenosine. ATP is the most efficient phosphate donor, but can also use GTP and ITP. Shows no sugar kinase activity, since it is unable to phosphorylate ribose, fructose-1-phosphate, or fructose-6-phosphate. This Thermoplasma acidophilum (strain ATCC 25905 / DSM 1728 / JCM 9062 / NBRC 15155 / AMRC-C165) protein is Nucleoside kinase.